Here is a 354-residue protein sequence, read N- to C-terminus: Holliday junction branch migration complex subunit RuvB (354 aa).

Positions 4 to 191 are large ATPase domain (RuvB-L); that stretch reads TDKLAAPARV…FGIVARLEFY (188 aa). Residues Leu30, Arg31, Gly72, Lys75, Thr76, Thr77, 138-140, Arg181, Tyr191, and Arg228 contribute to the ATP site; that span reads EDY. Thr76 is a Mg(2+) binding site. The segment at 192 to 262 is small ATPAse domain (RuvB-S); it reads TAEELARIVT…MADAALAMLD (71 aa). The tract at residues 265–354 is head domain (RuvB-H); sequence RVGFDLMDRK…GDAGELFGDA (90 aa). Residues Arg301, Arg320, and Arg325 each contribute to the DNA site.

It belongs to the RuvB family. As to quaternary structure, homohexamer. Forms an RuvA(8)-RuvB(12)-Holliday junction (HJ) complex. HJ DNA is sandwiched between 2 RuvA tetramers; dsDNA enters through RuvA and exits via RuvB. An RuvB hexamer assembles on each DNA strand where it exits the tetramer. Each RuvB hexamer is contacted by two RuvA subunits (via domain III) on 2 adjacent RuvB subunits; this complex drives branch migration. In the full resolvosome a probable DNA-RuvA(4)-RuvB(12)-RuvC(2) complex forms which resolves the HJ.

Its subcellular location is the cytoplasm. It catalyses the reaction ATP + H2O = ADP + phosphate + H(+). Its function is as follows. The RuvA-RuvB-RuvC complex processes Holliday junction (HJ) DNA during genetic recombination and DNA repair, while the RuvA-RuvB complex plays an important role in the rescue of blocked DNA replication forks via replication fork reversal (RFR). RuvA specifically binds to HJ cruciform DNA, conferring on it an open structure. The RuvB hexamer acts as an ATP-dependent pump, pulling dsDNA into and through the RuvAB complex. RuvB forms 2 homohexamers on either side of HJ DNA bound by 1 or 2 RuvA tetramers; 4 subunits per hexamer contact DNA at a time. Coordinated motions by a converter formed by DNA-disengaged RuvB subunits stimulates ATP hydrolysis and nucleotide exchange. Immobilization of the converter enables RuvB to convert the ATP-contained energy into a lever motion, pulling 2 nucleotides of DNA out of the RuvA tetramer per ATP hydrolyzed, thus driving DNA branch migration. The RuvB motors rotate together with the DNA substrate, which together with the progressing nucleotide cycle form the mechanistic basis for DNA recombination by continuous HJ branch migration. Branch migration allows RuvC to scan DNA until it finds its consensus sequence, where it cleaves and resolves cruciform DNA. This Cupriavidus taiwanensis (strain DSM 17343 / BCRC 17206 / CCUG 44338 / CIP 107171 / LMG 19424 / R1) (Ralstonia taiwanensis (strain LMG 19424)) protein is Holliday junction branch migration complex subunit RuvB.